Here is a 62-residue protein sequence, read N- to C-terminus: uncharacterized protein (62 aa).

Residues 17-62 are disordered; the sequence is YNNYNNNNNNNNNNNNNNNNNNNNNNNNNNNNNNNNNNNNNNKNNN.

This is an uncharacterized protein from Dictyostelium discoideum (Social amoeba).